The sequence spans 183 residues: Disulfide bond formation protein B 2 (183 aa).

Residues 1–9 are Cytoplasmic-facing; that stretch reads MSLACSRSL. A helical transmembrane segment spans residues 10–26; that stretch reads FFMAFTAGILALGASYY. Residues 27–44 lie on the Periplasmic side of the membrane; sequence LEYAVGLVPCSLCLVQRL. Cys-36 and Cys-39 are joined by a disulfide. The helical transmembrane segment at 45 to 61 threads the bilayer; the sequence is FMSVLTLCCGLAAVHGP. Residues 62-68 lie on the Cytoplasmic side of the membrane; that stretch reads QRVGLSL. Residues 69-85 form a helical membrane-spanning segment; the sequence is YWMVTLLSSLGGTTAAW. Residues 86–142 are Periplasmic-facing; it reads RQVLFQSDSLQELAHCAPNPEEMFSSLPWLCALMRMFNDTADCAELSWTLFDLSIPE. The cysteines at positions 101 and 128 are disulfide-linked. A helical transmembrane segment spans residues 143 to 161; the sequence is WSLLFFVGMSILAVYQLLR. At 162-183 the chain is on the cytoplasmic side; sequence QVWMALQRPLSGQPSHPALVRD.

It belongs to the DsbB family.

Its subcellular location is the cell inner membrane. Its function is as follows. Required for disulfide bond formation in some periplasmic proteins. Acts by oxidizing the DsbA protein. The sequence is that of Disulfide bond formation protein B 2 from Pseudomonas fluorescens (strain Pf0-1).